Reading from the N-terminus, the 391-residue chain is Protein-glutamate methylesterase/protein-glutamine glutaminase (391 aa).

Residues 4–121 form the Response regulatory domain; that stretch reads KVLVVDDSSF…ARNNEDAIKL (118 aa). The residue at position 55 (aspartate 55) is a 4-aspartylphosphate. Residues 197–391 enclose the CheB-type methylesterase domain; that stretch reads SGKHYQLVAI…IRLKTEVGCG (195 aa). Residues serine 209, histidine 236, and aspartate 333 contribute to the active site.

Belongs to the CheB family. Phosphorylated by CheA. Phosphorylation of the N-terminal regulatory domain activates the methylesterase activity.

Its subcellular location is the cytoplasm. The catalysed reaction is [protein]-L-glutamate 5-O-methyl ester + H2O = L-glutamyl-[protein] + methanol + H(+). The enzyme catalyses L-glutaminyl-[protein] + H2O = L-glutamyl-[protein] + NH4(+). Functionally, involved in chemotaxis. Part of a chemotaxis signal transduction system that modulates chemotaxis in response to various stimuli. Catalyzes the demethylation of specific methylglutamate residues introduced into the chemoreceptors (methyl-accepting chemotaxis proteins or MCP) by CheR. Also mediates the irreversible deamidation of specific glutamine residues to glutamic acid. This chain is Protein-glutamate methylesterase/protein-glutamine glutaminase, found in Pseudoalteromonas translucida (strain TAC 125).